Here is a 332-residue protein sequence, read N- to C-terminus: Hygromycin-B 7''-O-kinase (332 aa).

Asp223 (proton acceptor) is an active-site residue.

It belongs to the aminoglycoside phosphotransferase family.

The catalysed reaction is hygromycin B + ATP = 7''-O-phosphohygromycin B + ADP + H(+). Functionally, the aminoglycoside phosphotransferases achieve inactivation of their antibiotic substrates by phosphorylation. This Streptomyces hygroscopicus protein is Hygromycin-B 7''-O-kinase (hyg).